The primary structure comprises 464 residues: Glutamate--tRNA ligase (464 aa).

The 'HIGH' region motif lies at 9–19 (PSPTGYLHIGG). The 'KMSKS' region signature appears at 242–246 (KISKR). Lysine 245 is a binding site for ATP.

Belongs to the class-I aminoacyl-tRNA synthetase family. Glutamate--tRNA ligase type 1 subfamily. Monomer.

It is found in the cytoplasm. The enzyme catalyses tRNA(Glu) + L-glutamate + ATP = L-glutamyl-tRNA(Glu) + AMP + diphosphate. Functionally, catalyzes the attachment of glutamate to tRNA(Glu) in a two-step reaction: glutamate is first activated by ATP to form Glu-AMP and then transferred to the acceptor end of tRNA(Glu). The sequence is that of Glutamate--tRNA ligase from Neisseria gonorrhoeae (strain ATCC 700825 / FA 1090).